A 229-amino-acid polypeptide reads, in one-letter code: Ribosome maturation factor RimM (229 aa).

Residues 1 to 39 (MAGHDSGSAKRGRSPSFGVFVRKPVERAPTKGAGDGAAD) are disordered. One can recognise a PRC barrel domain in the interval 148-229 (ADEFYWVDLI…RIVVDWEADY (82 aa)).

It belongs to the RimM family. Binds ribosomal protein uS19.

The protein localises to the cytoplasm. Functionally, an accessory protein needed during the final step in the assembly of 30S ribosomal subunit, possibly for assembly of the head region. Essential for efficient processing of 16S rRNA. May be needed both before and after RbfA during the maturation of 16S rRNA. It has affinity for free ribosomal 30S subunits but not for 70S ribosomes. This chain is Ribosome maturation factor RimM, found in Burkholderia thailandensis (strain ATCC 700388 / DSM 13276 / CCUG 48851 / CIP 106301 / E264).